The primary structure comprises 50 residues: Omwaprin-a (50 aa).

In terms of domain architecture, WAP spans 3–47 (RPKKPGLCPPRPQKPCVKECKNDDSCPGQQKCCNYGCKDECRDPI). 4 disulfide bridges follow: cysteine 10/cysteine 35, cysteine 18/cysteine 39, cysteine 22/cysteine 34, and cysteine 28/cysteine 43.

It belongs to the venom waprin family. As to expression, expressed by the venom gland.

Its subcellular location is the secreted. Damages membranes of susceptible bacteria. Has antibacterial activity against the Gram-positive bacteria B.megaterium and S.warneri. After a 45-minute treatment with this protein, B.megaterium have no visible pili and are smooth. Has no antibacterial activity against the Gram-positive bacteria B.thuringiensis, S.aureus, S.clavuligerus and B.anthracis, or the Gram-negative bacteria E.coli and A.tumefaciens. Has no hemolytic activity. Does not inhibit the proteinases elastase and cathepsin G. Is not toxic to mice. This chain is Omwaprin-a, found in Oxyuranus microlepidotus (Inland taipan).